The primary structure comprises 180 residues: ATP-dependent protease subunit HslV (180 aa).

Thr2 is a catalytic residue. Na(+) is bound by residues Gly157, Cys160, and Thr163.

Belongs to the peptidase T1B family. HslV subfamily. A double ring-shaped homohexamer of HslV is capped on each side by a ring-shaped HslU homohexamer. The assembly of the HslU/HslV complex is dependent on binding of ATP.

The protein localises to the cytoplasm. The enzyme catalyses ATP-dependent cleavage of peptide bonds with broad specificity.. Its activity is regulated as follows. Allosterically activated by HslU binding. Functionally, protease subunit of a proteasome-like degradation complex believed to be a general protein degrading machinery. This Tolumonas auensis (strain DSM 9187 / NBRC 110442 / TA 4) protein is ATP-dependent protease subunit HslV.